A 263-amino-acid chain; its full sequence is 3-methyl-2-oxobutanoate hydroxymethyltransferase (263 aa).

Asp-44 and Asp-83 together coordinate Mg(2+). Residues 44 to 45, Asp-83, and Lys-113 contribute to the 3-methyl-2-oxobutanoate site; that span reads DS. Residue Glu-115 participates in Mg(2+) binding. Glu-183 (proton acceptor) is an active-site residue.

Belongs to the PanB family. As to quaternary structure, homodecamer; pentamer of dimers. It depends on Mg(2+) as a cofactor.

It is found in the cytoplasm. The enzyme catalyses 3-methyl-2-oxobutanoate + (6R)-5,10-methylene-5,6,7,8-tetrahydrofolate + H2O = 2-dehydropantoate + (6S)-5,6,7,8-tetrahydrofolate. It functions in the pathway cofactor biosynthesis; (R)-pantothenate biosynthesis; (R)-pantoate from 3-methyl-2-oxobutanoate: step 1/2. In terms of biological role, catalyzes the reversible reaction in which hydroxymethyl group from 5,10-methylenetetrahydrofolate is transferred onto alpha-ketoisovalerate to form ketopantoate. This Trichodesmium erythraeum (strain IMS101) protein is 3-methyl-2-oxobutanoate hydroxymethyltransferase.